The chain runs to 648 residues: Rab11 family-interacting protein 1 (648 aa).

The 129-residue stretch at 1-129 (MSLAASAGRG…DQSRRKKQWY (129 aa)) folds into the C2 domain. The segment covering 164–188 (SMKDKSRNPFGKLKDKIKGKNKDNT) has biased composition (basic and acidic residues). Disordered stretches follow at residues 164–470 (SMKD…GRKG), 483–503 (VRRP…SQNP), and 516–555 (VESK…PKIT). Over residues 189–201 (SDTASAIVPSTTP) the composition is skewed to polar residues. Phosphoserine occurs at positions 205, 209, and 237. Polar residues-rich tracts occupy residues 227 to 242 (PSLQ…SVLP) and 271 to 296 (SSAS…SNFS). 9 positions are modified to phosphoserine: Ser304, Ser319, Ser343, Ser345, Ser347, Ser349, Ser360, Ser361, and Ser386. The span at 314 to 323 (DSLSRSNVCI) shows a compositional bias: polar residues. Composition is skewed to basic and acidic residues over residues 381 to 394 (SDRR…KDSM) and 422 to 436 (ATKE…ESKK). The residue at position 438 (Ser438) is a Phosphoserine. The segment covering 445–454 (GKKDVAKGSE) has biased composition (basic and acidic residues). The FIP-RBD domain maps to 576–638 (KKYQPSDPAF…EETPNILRVP (63 aa)). Residues 584-648 (AFAYAQLTHD…AQTGKKAGKM (65 aa)) are necessary for interaction with RAB4A and RAB11A, subcellular location and endosomal recycling.

As to quaternary structure, homooligomer. Interacts with RAB11A, RAB11B, RAB25, RAB4A and RAB14.

The protein localises to the recycling endosome. It is found in the cytoplasmic vesicle. In terms of biological role, a Rab11 effector protein involved in the endosomal recycling process. Also involved in controlling membrane trafficking along the phagocytic pathway and in phagocytosis. Interaction with RAB14 may function in the process of neurite formation. In Rattus norvegicus (Rat), this protein is Rab11 family-interacting protein 1.